The sequence spans 104 residues: Putative zinc finger protein ORF104b (104 aa).

The segment at 62–85 adopts a C2H2-type zinc-finger fold; the sequence is YECKYCHTRYLSHTGIVYHLEREH.

The protein is Putative zinc finger protein ORF104b of Acidianus sp. F28 (AFV-2).